A 484-amino-acid polypeptide reads, in one-letter code: Glycogen synthase (484 aa).

K15 is a binding site for ADP-alpha-D-glucose.

The protein belongs to the glycosyltransferase 1 family. Bacterial/plant glycogen synthase subfamily.

It catalyses the reaction [(1-&gt;4)-alpha-D-glucosyl](n) + ADP-alpha-D-glucose = [(1-&gt;4)-alpha-D-glucosyl](n+1) + ADP + H(+). Its pathway is glycan biosynthesis; glycogen biosynthesis. Its function is as follows. Synthesizes alpha-1,4-glucan chains using ADP-glucose. The sequence is that of Glycogen synthase from Anoxybacillus flavithermus (strain DSM 21510 / WK1).